Consider the following 262-residue polypeptide: Acetylglutamate kinase (262 aa).

Residues 46-47, arginine 68, and asparagine 160 each bind substrate; that span reads GG.

Belongs to the acetylglutamate kinase family. ArgB subfamily.

It localises to the cytoplasm. The catalysed reaction is N-acetyl-L-glutamate + ATP = N-acetyl-L-glutamyl 5-phosphate + ADP. Its pathway is amino-acid biosynthesis; L-arginine biosynthesis; N(2)-acetyl-L-ornithine from L-glutamate: step 2/4. Its function is as follows. Catalyzes the ATP-dependent phosphorylation of N-acetyl-L-glutamate. The chain is Acetylglutamate kinase from Shewanella amazonensis (strain ATCC BAA-1098 / SB2B).